Consider the following 334-residue polypeptide: N-acetyl-S-alkylcysteine monooxygenase (334 aa).

To bacterial alkanal monooxygenase alpha and beta chains.

The catalysed reaction is N-acetyl-S-benzyl-L-cysteine + FMNH2 + O2 = (R)-N-acetyl-S-benzyl-L-cysteine sulfoxide + FMN + H2O + H(+). It carries out the reaction N-acetyl-S-methyl-L-cysteine + FMNH2 + O2 = (R)-N-acetyl-S-methyl-L-cysteine sulfoxide + FMN + H2O + H(+). Its pathway is amino-acid metabolism. Involved in a cysteine salvage pathway from S-alkylcysteine. Catalyzes the oxidation of N-acetyl-S-benzyl-L-cysteine and N-acetyl-S-methyl-L-cysteine to (R)-N-acetyl-S-benzyl-L-cysteine sulfoxide and (R)-N-acetyl-S-methyl-L-cysteine sulfoxide, respectively. This pathway is likely important in the catabolism of alkylated cysteine generated by proteolysis of alkylated glutathione formed in the detoxification of a wide range of electrophiles. This Bacillus subtilis (strain 168) protein is N-acetyl-S-alkylcysteine monooxygenase.